A 924-amino-acid polypeptide reads, in one-letter code: Hexokinase-3 (924 aa).

Residues 1 to 27 (MAAIEPSGLHPGERDSSCPQEGIPRPS) form a disordered region. 2 Hexokinase domains span residues 27 to 471 (SGSL…MVTA) and 477 to 913 (ATHR…LVTR). A hexokinase small subdomain 1 region spans residues 84–220 (HGTEQGDFLV…TYNIDVVAMV (137 aa)). 95–102 (ELGATGAS) is an ATP binding site. 95 to 104 (ELGATGASLR) serves as a coordination point for D-glucose 6-phosphate. D-glucose-binding positions include Ser168, 185–186 (TK), and 221–222 (ND). Residues 221–460 (NDTVGTMMGC…CDVSFIPSVD (240 aa)) are hexokinase large subdomain 1. Positions 222 and 245 each coordinate D-glucose 6-phosphate. Residues Asn248, Glu273, and 304 to 307 (QRFE) contribute to the D-glucose site. Residue 426–428 (GGR) coordinates D-glucose 6-phosphate. Residues 438–439 (CI) and 542–547 (DLGGTN) contribute to the ATP site. The hexokinase small subdomain 2 stretch occupies residues 531–662 (DGSERGDFLA…AVELNVVAIV (132 aa)). 542–546 (DLGGT) contributes to the D-glucose 6-phosphate binding site. D-glucose is bound by residues 610 to 611 (SF), 627 to 628 (TK), and 663 to 664 (ND). The interval 663-902 (NDTVGTMMSC…CTVTFLQSED (240 aa)) is hexokinase large subdomain 2. The D-glucose 6-phosphate site is built by Asp664 and Thr687. Position 687 (Thr687) interacts with ATP. D-glucose is bound by residues 689–690 (TN), Glu715, and Glu749. ATP contacts are provided by residues 754 to 755 (GM), 791 to 795 (TKFLS), and 870 to 874 (TLYKL). Residues 868–870 (DGT) and Ser904 contribute to the D-glucose 6-phosphate site.

This sequence belongs to the hexokinase family.

It carries out the reaction a D-hexose + ATP = a D-hexose 6-phosphate + ADP + H(+). It catalyses the reaction D-fructose + ATP = D-fructose 6-phosphate + ADP + H(+). The enzyme catalyses D-glucose + ATP = D-glucose 6-phosphate + ADP + H(+). Its pathway is carbohydrate metabolism; hexose metabolism. It functions in the pathway carbohydrate degradation; glycolysis; D-glyceraldehyde 3-phosphate and glycerone phosphate from D-glucose: step 1/4. Hexokinase is an allosteric enzyme inhibited by its product D-glucose 6-phosphate. Functionally, catalyzes the phosphorylation of hexose, such as D-glucose and D-fructose, to hexose 6-phosphate (D-glucose 6-phosphate and D-fructose 6-phosphate, respectively). Mediates the initial step of glycolysis by catalyzing phosphorylation of D-glucose to D-glucose 6-phosphate. The polypeptide is Hexokinase-3 (Rattus norvegicus (Rat)).